The chain runs to 456 residues: Equilibrative nucleoside transporter 2 (456 aa).

The chain crosses the membrane as a helical span at residues 13–33 (LVGISFFILGLGTLLPWNFFI). Asn56 carries N-linked (GlcNAc...) asparagine glycosylation. Transmembrane regions (helical) follow at residues 69-89 (WVTLLSQLPLLLFTLLNSFLY), 98-118 (ILGSLLAILLLFALTAALVKV), 123-143 (GLFFSVTMASVWFINSFCAVL), 161-181 (LFLSGQGLAGIFAALAMLMSL), and 192-212 (LGYFITPCVGILLSIVCYLSL). A disordered region spans residues 248 to 277 (GVPISPQQASPTLDLDPEKEPEPEEPQKPG). Ser252 carries the phosphoserine modification. Basic and acidic residues predominate over residues 263–275 (DPEKEPEPEEPQK). A run of 5 helical transmembrane segments spans residues 288–308 (IWLTALCLVLVFTVTLSVFPA), 323–343 (WGLFFNPICCFLLFNVMDWLG), 360–380 (LLPLLVCLRFLFVPLFMLCHV), 396–416 (FITFMLLFAVSNGYLVSLTMC), and 432–452 (ALMTFFLALGLSCGASLSFLF).

It belongs to the SLC29A/ENT transporter (TC 2.A.57) family.

Its subcellular location is the apical cell membrane. The protein localises to the basolateral cell membrane. It is found in the nucleus membrane. It catalyses the reaction inosine(in) = inosine(out). It carries out the reaction adenosine(in) = adenosine(out). The enzyme catalyses uridine(out) = uridine(in). The catalysed reaction is thymidine(in) = thymidine(out). It catalyses the reaction hypoxanthine(out) = hypoxanthine(in). It carries out the reaction adenine(out) = adenine(in). The enzyme catalyses cytidine(in) = cytidine(out). The catalysed reaction is thymine(out) = thymine(in). It catalyses the reaction uracil(in) = uracil(out). It carries out the reaction guanine(out) = guanine(in). The enzyme catalyses guanosine(in) = guanosine(out). Its function is as follows. Bidirectional uniporter involved in the facilitative transport of nucleosides and nucleobases, and contributes to maintaining their cellular homeostasis. Functions as a Na(+)-independent, passive transporter. Involved in the transport of nucleosides such as inosine, adenosine, uridine, thymidine, cytidine and guanosine. Also able to transport purine nucleobases (hypoxanthine, adenine, guanine) and pyrimidine nucleobases (thymine, uracil). Involved in nucleoside transport at basolateral membrane of kidney cells, allowing liver absorption of nucleoside metabolites. Mediates apical nucleoside uptake into Sertoli cells, thereby regulating the transport of nucleosides in testis across the blood-testis-barrier. Mediates both the influx and efflux of hypoxanthine in skeletal muscle microvascular endothelial cells to control the amount of intracellular hypoxanthine available for xanthine oxidase-mediated ROS production. This Mus musculus (Mouse) protein is Equilibrative nucleoside transporter 2.